Consider the following 323-residue polypeptide: Beta-ketoacyl-[acyl-carrier-protein] synthase III (323 aa).

Residues Cys113 and His250 contribute to the active site. Residues 251-255 are ACP-binding; sequence QANRR. Asn280 is a catalytic residue.

The protein belongs to the thiolase-like superfamily. FabH family. In terms of assembly, homodimer.

The protein resides in the cytoplasm. It catalyses the reaction malonyl-[ACP] + acetyl-CoA + H(+) = 3-oxobutanoyl-[ACP] + CO2 + CoA. Its pathway is lipid metabolism; fatty acid biosynthesis. Functionally, catalyzes the condensation reaction of fatty acid synthesis by the addition to an acyl acceptor of two carbons from malonyl-ACP. Catalyzes the first condensation reaction which initiates fatty acid synthesis and may therefore play a role in governing the total rate of fatty acid production. Possesses both acetoacetyl-ACP synthase and acetyl transacylase activities. Its substrate specificity determines the biosynthesis of branched-chain and/or straight-chain of fatty acids. The chain is Beta-ketoacyl-[acyl-carrier-protein] synthase III from Rhizobium rhizogenes (strain K84 / ATCC BAA-868) (Agrobacterium radiobacter).